A 66-amino-acid polypeptide reads, in one-letter code: Panusin (66 aa).

Positions 1–22 (MKTKAVLMLMLLVLVAATLVQG) are cleaved as a signal peptide. A propeptide spanning residues 23 to 26 (EPEP) is cleaved from the precursor. 3 disulfide bridges follow: Cys32-Cys54, Cys39-Cys61, and Cys44-Cys60. Tyr65 is subject to Tyrosine amide.

As to quaternary structure, forms dimers and higher-order oligomers. In terms of processing, contains 3 disulfide bonds.

Its function is as follows. Antimicrobial peptide. Has antibacterial activity against Gram-positive bacteria S.aureus ATCC 29737 and B.subtilis ATCC 6633 as well as against Gram-negative bacteria E.coli ATCC 10536 and K.pneumoniae ATCC 10031. The chain is Panusin from Panulirus argus (Caribbean spiny lobster).